A 715-amino-acid chain; its full sequence is Harpin secretion protein HrpI (715 aa).

7 consecutive transmembrane segments (helical) span residues 23–43, 45–65, 69–89, 115–135, 203–223, 241–261, and 298–318; these read GAAI…TGLI, VLIA…MYLP, AFST…ALSI, GNLA…FLVI, AIAG…IGVL, IGDG…AGMI, and MLGF…ISAI.

It belongs to the FHIPEP (flagella/HR/invasion proteins export pore) family.

It localises to the cell inner membrane. Functionally, involved in the secretion of harpin; a proteinaceous elicitor of the hypersensitivity response in plants. This Erwinia amylovora (Fire blight bacteria) protein is Harpin secretion protein HrpI (hrpI).